Consider the following 282-residue polypeptide: 4-diphosphocytidyl-2-C-methyl-D-erythritol kinase (282 aa).

Lys12 is an active-site residue. 95–105 (PMGGGIGGGSS) is a binding site for ATP. Asp137 is an active-site residue.

It belongs to the GHMP kinase family. IspE subfamily.

The catalysed reaction is 4-CDP-2-C-methyl-D-erythritol + ATP = 4-CDP-2-C-methyl-D-erythritol 2-phosphate + ADP + H(+). Its pathway is isoprenoid biosynthesis; isopentenyl diphosphate biosynthesis via DXP pathway; isopentenyl diphosphate from 1-deoxy-D-xylulose 5-phosphate: step 3/6. Catalyzes the phosphorylation of the position 2 hydroxy group of 4-diphosphocytidyl-2C-methyl-D-erythritol. This chain is 4-diphosphocytidyl-2-C-methyl-D-erythritol kinase, found in Pseudomonas paraeruginosa (strain DSM 24068 / PA7) (Pseudomonas aeruginosa (strain PA7)).